The chain runs to 143 residues: Ribosome maturation factor RimP (143 aa).

Belongs to the RimP family.

Its subcellular location is the cytoplasm. Required for maturation of 30S ribosomal subunits. This is Ribosome maturation factor RimP from Nitrosomonas eutropha (strain DSM 101675 / C91 / Nm57).